Consider the following 840-residue polypeptide: Phosphatidylinositol-glycan-specific phospholipase D (840 aa).

Residues 1–23 (MSAFRLWPGLLIMLGSLCHRGSP) form the signal peptide. N-linked (GlcNAc...) asparagine glycosylation is found at asparagine 94, asparagine 271, asparagine 292, asparagine 307, and asparagine 321. FG-GAP repeat units follow at residues 367-428 (SPLA…GLPP), 436-497 (EAHR…GGMS), 499-559 (SPNI…LSDK), 563-623 (NVEA…SLGR), 633-693 (QSWF…GATR), 704-770 (LLLS…TLGD), and 788-840 (QYVL…LGSD). 5 N-linked (GlcNAc...) asparagine glycosylation sites follow: asparagine 501, asparagine 568, asparagine 591, asparagine 604, and asparagine 659.

It belongs to the GPLD1 family. In terms of assembly, monomer.

Its subcellular location is the secreted. It catalyses the reaction a 6-(alpha-D-glucosaminyl)-1-(1,2-diacyl-sn-glycero-3-phospho)-1D-myo-inositol + H2O = 6-(alpha-D-glucosaminyl)-1D-myo-inositol + a 1,2-diacyl-sn-glycero-3-phosphate + H(+). Its function is as follows. This protein hydrolyzes the inositol phosphate linkage in proteins anchored by phosphatidylinositol glycans (GPI-anchor) thus releasing these proteins from the membrane. The chain is Phosphatidylinositol-glycan-specific phospholipase D (GPLD1) from Homo sapiens (Human).